Reading from the N-terminus, the 187-residue chain is Cell division protein SepF (187 aa).

The interval 21 to 97 (EVEVPDKQQQ…ATPNNASQES (77 aa)) is disordered. Composition is skewed to polar residues over residues 38 to 63 (EQSQ…YTTT) and 70 to 97 (RMSN…SQES).

The protein belongs to the SepF family. As to quaternary structure, homodimer. Interacts with FtsZ.

The protein localises to the cytoplasm. In terms of biological role, cell division protein that is part of the divisome complex and is recruited early to the Z-ring. Probably stimulates Z-ring formation, perhaps through the cross-linking of FtsZ protofilaments. Its function overlaps with FtsA. The chain is Cell division protein SepF from Staphylococcus aureus (strain Mu3 / ATCC 700698).